Here is a 293-residue protein sequence, read N- to C-terminus: Ribosomal protein L11 methyltransferase (293 aa).

S-adenosyl-L-methionine contacts are provided by T145, G166, D188, and N230.

This sequence belongs to the methyltransferase superfamily. PrmA family.

The protein localises to the cytoplasm. The catalysed reaction is L-lysyl-[protein] + 3 S-adenosyl-L-methionine = N(6),N(6),N(6)-trimethyl-L-lysyl-[protein] + 3 S-adenosyl-L-homocysteine + 3 H(+). Methylates ribosomal protein L11. The sequence is that of Ribosomal protein L11 methyltransferase from Escherichia coli O8 (strain IAI1).